The primary structure comprises 323 residues: Sporulation-delaying protein SdpB (323 aa).

6 helical membrane-spanning segments follow: residues Leu-27 to Ala-49, Ser-70 to Arg-92, Leu-112 to Leu-134, Thr-155 to Leu-177, Ile-219 to Ile-241, and Leu-248 to Ile-270.

It is found in the cell membrane. In terms of biological role, required for the maturation of SdpC to SDP. Not required for SdpC signal peptide cleavage, secretion from the cell or disulfide bond formation. The protein is Sporulation-delaying protein SdpB of Bacillus subtilis (strain 168).